The chain runs to 667 residues: WD repeat-containing protein 48 homolog (667 aa).

WD repeat units follow at residues 26–65 (QHRN…NEKY), 71–110 (HHND…CMST), 113–152 (THRD…ALTA), 164–203 (GSKD…RSMK), 206–245 (GHTE…CVQT), 248–287 (VHKE…NKML), 290–329 (EEQA…RCTL), and 350–389 (KGGA…KKEQ). Residues 591-615 (ETTPSGGNANNSLQNSQSDANSEGS) form a disordered region.

The protein belongs to the WD repeat WDR48 family. In terms of assembly, catalytic component of the Usp12-46 deubiquitylase complex consisting of Usp12-46, Wdr20 and Uaf1; regulatory subunit that, together wtih Wdr20, stabilizes Usp12-46. The Usp12-46 deubiquitylase complex associates with arr/arrow; the interaction leads to deubiquitination and stabilization of arr/arrow.

Regulatory component of the Usp12-46 deubiquitylase complex. activates deubiquitination by increasing the catalytic turnover without increasing the affinity of deubiquitinating enzymes for the substrate. The complex deubiquitylates the wg/wingless-signaling receptor arr/arrow, which stabilizes the receptor and increases its concentration at the cell surface; this enhances the sensitivity of cells to wg/wingless-signal stimulation. This increases the amplitude and spatial range of the signaling response to the wg/wingless morphogen gradient, facilitating the precise concentration-dependent regulation of its target genes. Together with Wdr20 and Usp12-46 required for wg/wingless-mediated signaling in the wing imaginal disc and for wg/wingless-dependent regulation of intestinal stem cell proliferation. The polypeptide is WD repeat-containing protein 48 homolog (Drosophila ananassae (Fruit fly)).